Consider the following 603-residue polypeptide: Elongation factor 4 (603 aa).

Residues 9 to 191 form the tr-type G domain; sequence SNIRNFSIIA…RIVRQIPPPK (183 aa). Residues 21–26 and 138–141 each bind GTP; these read DHGKST and NKID.

It belongs to the TRAFAC class translation factor GTPase superfamily. Classic translation factor GTPase family. LepA subfamily.

The protein resides in the cell inner membrane. It catalyses the reaction GTP + H2O = GDP + phosphate + H(+). Required for accurate and efficient protein synthesis under certain stress conditions. May act as a fidelity factor of the translation reaction, by catalyzing a one-codon backward translocation of tRNAs on improperly translocated ribosomes. Back-translocation proceeds from a post-translocation (POST) complex to a pre-translocation (PRE) complex, thus giving elongation factor G a second chance to translocate the tRNAs correctly. Binds to ribosomes in a GTP-dependent manner. This chain is Elongation factor 4, found in Idiomarina loihiensis (strain ATCC BAA-735 / DSM 15497 / L2-TR).